Reading from the N-terminus, the 81-residue chain is Acyl carrier protein (81 aa).

Residues 3 to 78 enclose the Carrier domain; that stretch reads QEIFEKVKSI…AAVDYIEKEQ (76 aa). Ser-38 carries the post-translational modification O-(pantetheine 4'-phosphoryl)serine.

It belongs to the acyl carrier protein (ACP) family. 4'-phosphopantetheine is transferred from CoA to a specific serine of apo-ACP by AcpS. This modification is essential for activity because fatty acids are bound in thioester linkage to the sulfhydryl of the prosthetic group.

The protein localises to the cytoplasm. It functions in the pathway lipid metabolism; fatty acid biosynthesis. Its function is as follows. Carrier of the growing fatty acid chain in fatty acid biosynthesis. The polypeptide is Acyl carrier protein (Crocosphaera subtropica (strain ATCC 51142 / BH68) (Cyanothece sp. (strain ATCC 51142))).